Here is a 429-residue protein sequence, read N- to C-terminus: Ribosomal RNA small subunit methyltransferase B (429 aa).

Residues 254–260 (CAAPGGK), Asp277, Asp303, and Asp322 each bind S-adenosyl-L-methionine. The active-site Nucleophile is the Cys375. A disordered region spans residues 397–419 (ALSETGTPDQPGQQNLPGGEEGD). Residues 400-412 (ETGTPDQPGQQNL) show a composition bias toward polar residues.

This sequence belongs to the class I-like SAM-binding methyltransferase superfamily. RsmB/NOP family.

The protein resides in the cytoplasm. The catalysed reaction is cytidine(967) in 16S rRNA + S-adenosyl-L-methionine = 5-methylcytidine(967) in 16S rRNA + S-adenosyl-L-homocysteine + H(+). In terms of biological role, specifically methylates the cytosine at position 967 (m5C967) of 16S rRNA. The polypeptide is Ribosomal RNA small subunit methyltransferase B (Salmonella newport (strain SL254)).